The following is a 230-amino-acid chain: NAD(P)H-hydrate epimerase (230 aa).

A YjeF N-terminal domain is found at Y11–T223. A (6S)-NADPHX-binding site is contributed by N59–D63. K(+) contacts are provided by N60 and D125. Residues G129–A137 and D165 contribute to the (6S)-NADPHX site. Position 168 (S168) interacts with K(+).

Belongs to the NnrE/AIBP family. K(+) serves as cofactor.

The catalysed reaction is (6R)-NADHX = (6S)-NADHX. It carries out the reaction (6R)-NADPHX = (6S)-NADPHX. Functionally, catalyzes the epimerization of the S- and R-forms of NAD(P)HX, a damaged form of NAD(P)H that is a result of enzymatic or heat-dependent hydration. This is a prerequisite for the S-specific NAD(P)H-hydrate dehydratase to allow the repair of both epimers of NAD(P)HX. This is NAD(P)H-hydrate epimerase from Clavibacter michiganensis subsp. michiganensis (strain NCPPB 382).